The sequence spans 887 residues: MAEDRIKSKLRRPASIESTMSSRTKPRHKPSPMSILMPHLMVGESFRKYRPHGLRNIRMNGHLDWNQLRKSFEKQSTFHGISHAATADGKWRWFWYTAFTICLLALLIQIFFLISKYRQYGKTVDLDLKFENAPFPSITICNLNPYKKSAIQSNPNTKAMMEAYSRRIGSGDKTEGIAAALSATGGLHAKVRRAKRKAKGKPRLRDRRYHQAFAQCLCDIEQLTGDRKGSCFAAFKGKIEIDTNNTAGFMNLHTSRCLCQLDTVSKALWPCFPYSSWKEKLCSECVDNTGHCPMRFYKGNELYENIKEQVDLCLCHKEYNHCVSTRDDGIILEISPNDELNDLDIGKKIASQLSAQQEKQAEVTTTEAPTVTQALGFEELTDDIAITSQAQENLMFAVGEMSEKAKESMSYELDELVLKCSFNQKDCQMDRDFTLHYDNTFGNCYTFNYNRTAEVASHRAGANYGLRVLLYANVSEYLPTTEAVGFRITVHDKHIVPFPDAFGYSAPTGFMSSFGVRMKQFIRLEPPYGHCRHGGEDAATFVYTGFQYSVEACHRSCAQKVIVEACGCADPMYPVAEMFGNNTKPCQAVNMDQRECLRNTTLWLGELYSKGKEAIIPDCYCHQPCQETNYEVTYSSARWPSGSAKVMECLPGDFLCLEKYRKNAAMVQIFYEELNYETMQESPAYTLTSVLADLGGLTGLWIGASVVSLLEIVTLIVFATQAYVRKRKGSISAQSHHSVPVHRASRVSLNTLHKSSTTQSVKLSVMDIRSIKSIHSNHSSKSKQSILIEDLPPAIQEQSDDEEETTESSRTNGSCRYLAPGEDLPCLCKYHPDGSIRIMKALCPVHGYMVRRNYDYSVSNSEEEDAEDEVHREPEPFYSAPYEHRKK.

Residues 1-33 (MAEDRIKSKLRRPASIESTMSSRTKPRHKPSPM) form a disordered region. The Cytoplasmic portion of the chain corresponds to 1–93 (MAEDRIKSKL…AATADGKWRW (93 aa)). Residues 94 to 114 (FWYTAFTICLLALLIQIFFLI) traverse the membrane as a helical segment. Topologically, residues 115-698 (SKYRQYGKTV…SVLADLGGLT (584 aa)) are extracellular. Residues Asn-244, Asn-450, Asn-473, Asn-581, and Asn-599 are each glycosylated (N-linked (GlcNAc...) asparagine). The chain crosses the membrane as a helical span at residues 699–719 (GLWIGASVVSLLEIVTLIVFA). Over 720 to 887 (TQAYVRKRKG…YSAPYEHRKK (168 aa)) the chain is Cytoplasmic. 2 disordered regions span residues 794–815 (AIQEQSDDEEETTESSRTNGSC) and 859–887 (SNSEEEDAEDEVHREPEPFYSAPYEHRKK).

This sequence belongs to the amiloride-sensitive sodium channel (TC 1.A.6) family. As to expression, expressed in body wall muscle.

The protein localises to the membrane. In terms of biological role, ion channel which is permeable to small monovalent cations. Shown not to be H+-ion gated. May be mechanosensitive and is required for growth and muscle development. The chain is Degenerin-like protein unc-105 (unc-105) from Caenorhabditis elegans.